A 267-amino-acid chain; its full sequence is Tetrahydromethanopterin S-methyltransferase subunit C (267 aa).

The next 8 membrane-spanning stretches (helical) occupy residues 18–38 (LMALGILGGLAGIYASAVNPV), 39–59 (IGPVLASLGAVCAIVWGADAI), 76–96 (YMSVSIGIVGVVAGLASVFVV), 99–119 (IAVPVVALILAMILGVVVAVL), 138–158 (ISGAAALSVLGFSAAIAGSYT), 163–183 (LTSVITTGFIGLLFILNTMAI), 209–229 (FISMAIVGLLGIGLNPSWWLV), and 230–250 (SLIGALCWIVAFRAFVSASFE).

The protein belongs to the MtrC family. In terms of assembly, the complex is composed of 8 subunits; MtrA, MtrB, MtrC, MtrD, MtrE, MtrF, MtrG and MtrH.

It is found in the cell membrane. The catalysed reaction is 5-methyl-5,6,7,8-tetrahydromethanopterin + coenzyme M + 2 Na(+)(in) = 5,6,7,8-tetrahydromethanopterin + methyl-coenzyme M + 2 Na(+)(out). The protein operates within one-carbon metabolism; methanogenesis from CO(2); methyl-coenzyme M from 5,10-methylene-5,6,7,8-tetrahydromethanopterin: step 2/2. Functionally, part of a complex that catalyzes the formation of methyl-coenzyme M and tetrahydromethanopterin from coenzyme M and methyl-tetrahydromethanopterin. This is an energy-conserving, sodium-ion translocating step. This is Tetrahydromethanopterin S-methyltransferase subunit C from Methanothermobacter marburgensis (strain ATCC BAA-927 / DSM 2133 / JCM 14651 / NBRC 100331 / OCM 82 / Marburg) (Methanobacterium thermoautotrophicum).